The following is a 701-amino-acid chain: Putative pectinesterase/pectinesterase inhibitor 43 (701 aa).

The first 22 residues, 1-22 (MNKYVLLGVTALIMAMVICVEA), serve as a signal peptide directing secretion. A pectinesterase inhibitor 43 region spans residues 42-195 (MITKTTVSII…QHLTSNGLAI (154 aa)). Composition is skewed to low complexity over residues 221–256 (GILGSGSSRDESVGSSQDSPPNEDSSDDSPSTVDSS) and 263–275 (SSSENQSSDSSNN). Residues 221 to 351 (GILGSGSSRD…DPLRKLNPLN (131 aa)) are disordered. Asparagine 267 is a glycosylation site (N-linked (GlcNAc...) asparagine). Composition is skewed to polar residues over residues 276–287 (RPLDSSKNQQME) and 313–338 (QKSTSSENQPLDSSENPPQKSTSSEN). The segment at 391–688 (NVVVAKDGSG…FAPGNFLRGN (298 aa)) is pectinesterase 43. Substrate-binding residues include threonine 467 and glutamine 497. The active-site Proton donor; for pectinesterase activity is the aspartate 520. Cysteine 534 and cysteine 554 are joined by a disulfide. The Nucleophile; for pectinesterase activity role is filled by aspartate 541. Substrate contacts are provided by arginine 609 and tryptophan 611. The N-linked (GlcNAc...) asparagine glycan is linked to asparagine 637.

It in the N-terminal section; belongs to the PMEI family. The protein in the C-terminal section; belongs to the pectinesterase family. As to expression, expressed in flower buds.

The protein localises to the secreted. It is found in the cell wall. It catalyses the reaction [(1-&gt;4)-alpha-D-galacturonosyl methyl ester](n) + n H2O = [(1-&gt;4)-alpha-D-galacturonosyl](n) + n methanol + n H(+). The protein operates within glycan metabolism; pectin degradation; 2-dehydro-3-deoxy-D-gluconate from pectin: step 1/5. Functionally, acts in the modification of cell walls via demethylesterification of cell wall pectin. The sequence is that of Putative pectinesterase/pectinesterase inhibitor 43 (PME43) from Arabidopsis thaliana (Mouse-ear cress).